The chain runs to 154 residues: uncharacterized protein (154 aa).

The region spanning 14 to 146 (AMNLYRVFAR…LIVLLKKAGI (133 aa)) is the HTH marR-type domain. A DNA-binding region (H-T-H motif) is located at residues 60–83 (LQQIGSRLLLVSGNVTYVIDKLER).

This is an uncharacterized protein from Bacillus subtilis (strain 168).